The sequence spans 239 residues: Ribose-5-phosphate isomerase A (239 aa).

Residues 31–34 (FGST), 88–91 (DGAD), and 101–104 (KGGG) each bind substrate. The active-site Proton acceptor is the Glu-110. Residue Lys-128 coordinates substrate.

This sequence belongs to the ribose 5-phosphate isomerase family. In terms of assembly, homodimer.

It carries out the reaction aldehydo-D-ribose 5-phosphate = D-ribulose 5-phosphate. The protein operates within carbohydrate degradation; pentose phosphate pathway; D-ribose 5-phosphate from D-ribulose 5-phosphate (non-oxidative stage): step 1/1. Its function is as follows. Catalyzes the reversible conversion of ribose-5-phosphate to ribulose 5-phosphate. This chain is Ribose-5-phosphate isomerase A, found in Chloroflexus aurantiacus (strain ATCC 29366 / DSM 635 / J-10-fl).